The following is an 87-amino-acid chain: Small ribosomal subunit protein bS18 (87 aa).

The segment covering 1–19 (MSTRSRARKRSRVRSRTRR) has biased composition (basic residues). The interval 1 to 25 (MSTRSRARKRSRVRSRTRRKDPIFV) is disordered.

This sequence belongs to the bacterial ribosomal protein bS18 family. In terms of assembly, part of the 30S ribosomal subunit. Forms a tight heterodimer with protein bS6.

Its function is as follows. Binds as a heterodimer with protein bS6 to the central domain of the 16S rRNA, where it helps stabilize the platform of the 30S subunit. In Rhodopirellula baltica (strain DSM 10527 / NCIMB 13988 / SH1), this protein is Small ribosomal subunit protein bS18.